Reading from the N-terminus, the 125-residue chain is Small ribosomal subunit protein bS6 (125 aa).

Positions 99-125 (ASPMVKAKDERRASAEVENNDFEDAEE) are disordered. Residues 104 to 113 (KAKDERRASA) are compositionally biased toward basic and acidic residues. The span at 116-125 (ENNDFEDAEE) shows a compositional bias: acidic residues.

It belongs to the bacterial ribosomal protein bS6 family.

In terms of biological role, binds together with bS18 to 16S ribosomal RNA. This Mannheimia succiniciproducens (strain KCTC 0769BP / MBEL55E) protein is Small ribosomal subunit protein bS6.